The chain runs to 185 residues: NEDD8-conjugating enzyme UBE2F (185 aa).

An N-acetylmethionine modification is found at M1. Residues 1 to 29 form an interaction with UBA3 region; sequence MLTLASKLKRDDGLKGSRTAATASDSTRR. A UBC core domain is found at 32–185; the sequence is VRDKLLVKEV…VDDYIKRYAR (154 aa). The active-site Glycyl thioester intermediate is C116.

Belongs to the ubiquitin-conjugating enzyme family. UBE2F subfamily. Interacts with UBA3 and RBX2. Interacts (N-terminally acetylated form) with (via DCUN1 domain) DCUN1D1, DCUN1D2, DCUN1D3, DCUN1D4 and DCUN1D5. In terms of processing, the acetylation of Met-1 increases affinity for DCUN1D3 by about 2 orders of magnitude and is crucial for NEDD8 transfer to cullins. As to expression, widely expressed (at protein level).

It catalyses the reaction [E1 NEDD8-activating enzyme]-S-[NEDD8 protein]-yl-L-cysteine + [E2 NEDD8-conjugating enzyme]-L-cysteine = [E1 NEDD8-activating enzyme]-L-cysteine + [E2 NEDD8-conjugating enzyme]-S-[NEDD8-protein]-yl-L-cysteine.. Its pathway is protein modification; protein neddylation. Functionally, accepts the ubiquitin-like protein NEDD8 from the UBA3-NAE1 E1 complex and catalyzes its covalent attachment to other proteins. Together with the E3 ubiquitin ligase RNF7/RBX2, specifically neddylates cullin-5 (CUL5). Does not neddylate CUL1, CUL2, CUL3, CUL4A or CUL4B. Mediates neddylation of the CUL9-RBX1 complex. (Microbial infection) Following infection by HIV-1 virus, participates to HIV-1 Vif protein-mediated ubiquitination and degradation of APOBEC3G by mediating neddylation of cullin-5 (CUL5). This is NEDD8-conjugating enzyme UBE2F (UBE2F) from Homo sapiens (Human).